The sequence spans 164 residues: Transcription factor MafF (164 aa).

A basic motif region spans residues 51 to 76 (RLKQRRRTLKNRGYAASCRVKRVCQK). In terms of domain architecture, bZIP spans 51 to 114 (RLKQRRRTLK…DALRGKCEAL (64 aa)). Positions 79–93 (LQKQKSELEREVDKL) are leucine-zipper. Residues 141–164 (KSTPGSGSGPAHGPDPAHGPASCS) form a disordered region. Low complexity predominate over residues 149–164 (GPAHGPDPAHGPASCS).

The protein belongs to the bZIP family. Maf subfamily. Monomer and homo- or heterodimer. Interacts with MIP. Forms high affinity heterodimers with members of the CNC-bZIP family such as NFE2L1/NRF1. As to expression, expressed in the term myometrium and kidney.

Its subcellular location is the nucleus. In terms of biological role, since they lack a putative transactivation domain, the small Mafs behave as transcriptional repressors when they dimerize among themselves. However, they seem to serve as transcriptional activators by dimerizing with other (usually larger) basic-zipper proteins, such as NFE2L1/NRF1, and recruiting them to specific DNA-binding sites. Interacts with the upstream promoter region of the oxytocin receptor gene. May be a transcriptional enhancer in the up-regulation of the oxytocin receptor gene at parturition. The polypeptide is Transcription factor MafF (MAFF) (Homo sapiens (Human)).